A 164-amino-acid polypeptide reads, in one-letter code: SsrA-binding protein (164 aa).

It belongs to the SmpB family.

It is found in the cytoplasm. Functionally, required for rescue of stalled ribosomes mediated by trans-translation. Binds to transfer-messenger RNA (tmRNA), required for stable association of tmRNA with ribosomes. tmRNA and SmpB together mimic tRNA shape, replacing the anticodon stem-loop with SmpB. tmRNA is encoded by the ssrA gene; the 2 termini fold to resemble tRNA(Ala) and it encodes a 'tag peptide', a short internal open reading frame. During trans-translation Ala-aminoacylated tmRNA acts like a tRNA, entering the A-site of stalled ribosomes, displacing the stalled mRNA. The ribosome then switches to translate the ORF on the tmRNA; the nascent peptide is terminated with the 'tag peptide' encoded by the tmRNA and targeted for degradation. The ribosome is freed to recommence translation, which seems to be the essential function of trans-translation. This is SsrA-binding protein from Corynebacterium glutamicum (strain R).